Reading from the N-terminus, the 674-residue chain is MPLVAAMLTRSNGAWKKATSVVQASICRDQQRPNHTTITSVTSVSQRRHFSSAENGAKPSRSHPSAAEAKQKRESDREFLISVLESSATKRDAKAYLQTYGSSKAKAVPKESPASTALVSDKAIPEAKDVSFFVQGSVPVESLEADEVPRVAIVKLREPQTWDDTLLGGVAKTLTRLRDLGLRSVIVLECSAEKSSVLDWKDVVTQQTDRLQKAIQKYGTPGAELVDGGIWKRSTTPPSASSLGHTKLSVGFGEAFTAPLRHGHILVVPSRAVVEETLEHTAADANEVIFALAKYFAGLQVNAGQNQTRTAVVDRVIIIDPFGGIPARNLGDGARVFINLEEQFNSIKATLSAAEPQDNGSPIPGISGNPKASHIENLELVKNILAILPSTASAVITSPIEAANLQSNQAYDIRRDAEEAMAGEVKTRRWQNPIIHNLLTDRPIYSASLPIGRIKSTTNGTYQRSSRMPTTTLAKKGLPVTIFPDTRTRSWQPPKPGTPRLKLTDTCVDLPRLIHLINDSFGRKLDAEHYLNRVQDSLAGIIIAGEYEGGAILTWERPFGLDEETAYNSGRLVPYLDKFAVLKKSQGAGGVADIVFNAMVRDCFPNGVCWRSRKDNPVNKWYFERSRGVRKLPGSNWAMFWTTPEAAVKDQVMEDYEDVCRGVVPSWADSKAAD.

The transit peptide at 1-50 (MPLVAAMLTRSNGAWKKATSVVQASICRDQQRPNHTTITSVTSVSQRRHF) directs the protein to the mitochondrion. Over residues 33–45 (PNHTTITSVTSVS) the composition is skewed to polar residues. The disordered stretch occupies residues 33–74 (PNHTTITSVTSVSQRRHFSSAENGAKPSRSHPSAAEAKQKRE). The N-acetyltransferase domain maps to 497–665 (GTPRLKLTDT…YEDVCRGVVP (169 aa)).

Belongs to the acetyltransferase family.

It is found in the mitochondrion. It catalyses the reaction L-glutamate + acetyl-CoA = N-acetyl-L-glutamate + CoA + H(+). It functions in the pathway amino-acid biosynthesis; L-arginine biosynthesis; N(2)-acetyl-L-ornithine from L-glutamate: step 1/4. Functionally, N-acetylglutamate synthase involved in arginine biosynthesis. This Podospora anserina (strain S / ATCC MYA-4624 / DSM 980 / FGSC 10383) (Pleurage anserina) protein is Amino-acid acetyltransferase, mitochondrial (ARG2).